The sequence spans 102 residues: Small ribosomal subunit protein uS14m (102 aa).

The protein belongs to the universal ribosomal protein uS14 family.

The protein resides in the mitochondrion. The chain is Small ribosomal subunit protein uS14m (RPS14) from Paramecium tetraurelia.